Consider the following 549-residue polypeptide: T-complex protein 1 subunit theta (549 aa).

The protein belongs to the TCP-1 chaperonin family. Heterooligomeric complex of about 850 to 900 kDa that forms two stacked rings, 12 to 16 nm in diameter. Interacts with CCT3, KNAT1, STM and TTG1. Expressed in shoot meristems, root tip, vasculature and leaf epidermis.

The protein resides in the cytoplasm. Functionally, molecular chaperone; assists the folding of proteins upon ATP hydrolysis. Known to play a role, in vitro, in the folding of actin and tubulin. Contributes to stem cell maintenance through its impact on transcription factors trafficking through plasmodesmata. Probably involved in refolding translocated, partially unfolded proteins, including viral movement proteins. This chain is T-complex protein 1 subunit theta, found in Arabidopsis thaliana (Mouse-ear cress).